Here is a 552-residue protein sequence, read N- to C-terminus: MAGUK p55 subfamily member 2 (552 aa).

2 consecutive L27 domains span residues 8-59 and 60-118; these read SESA…EETK and LEAV…YETP. Phosphoserine is present on Ser42. Phosphothreonine is present on Thr117. Ser121 bears the Phosphoserine mark. Positions 140–219 constitute a PDZ domain; the sequence is MVGIRKTAGE…SVILKILPSY (80 aa). One can recognise an SH3 domain in the interval 225-293; it reads PRQVFVKCHF…PSQLLEEKRK (69 aa). A Guanylate kinase-like domain is found at 350 to 537; that stretch reads RKTLVLIGAQ…TFRELQTAME (188 aa).

It belongs to the MAGUK family. Can homomultimerise. Interacts with CACNG2. Interacts (via the SH3-Guanylate kinase-like sub-module) with DLG4/PSD95 and DLGAP1/GKAP. Interacts (via the PDZ domain) with CADM1 (via C-terminus). Interacts with KCNN2/SK2 (via N-terminal domain). Interacts with SRC. Post-translationally, phosphorylated by SRC. Expressed in pyramidal neurons of CA1 region of the hippocampus.

It localises to the cell projection. The protein resides in the dendrite. The protein localises to the postsynaptic density. Its subcellular location is the cytoplasm. It is found in the cytoskeleton. It localises to the membrane. Its function is as follows. Postsynaptic MAGUK scaffold protein that links CADM1 cell adhesion molecules to core components of the postsynaptic density. In CA1 pyramidal neurons, required for synaptic KCNN2-containing channel function and long-term potentiation expression. Seems to negatively regulate SRC function in epithelial cells. The sequence is that of MAGUK p55 subfamily member 2 from Mus musculus (Mouse).